The chain runs to 298 residues: DNA repair protein RecO (298 aa).

Belongs to the RecO family.

Its function is as follows. Involved in DNA repair and RecF pathway recombination. The sequence is that of DNA repair protein RecO from Cupriavidus metallidurans (strain ATCC 43123 / DSM 2839 / NBRC 102507 / CH34) (Ralstonia metallidurans).